A 900-amino-acid polypeptide reads, in one-letter code: MALEDMDKKYRISDIARELQVSPQEVLRFVKQEGARVASTSSMVDTEMHGLILGQFSDEKKMVDETRKIRAEKKQRLNRLEEQSRKTVEKEDQLRDTLQPSPVPGRVEVPVPAPIEAPVAAPVVPDAPVAPVEVVPPAPPEAPLMAEAAVEAEPEVAPPSLEAEEDSPVEAQANDQIVSYDAPKNIGGLTVLGTLDMESESDRKRRGKKKNFKESADALKDEFDTTGSVELDDDGKPKKKPGSSPLGSDLGMGKKKGKKKKKPEVDEKVISANIRSTISGMDVGAGSGSRSKFRKQRKMEREHEQEEADAFREMQQQVVRVTEYASPHELAELMSVTAKDIIQKCFTLGKFVTINQRLDKESIELIALEFGYEAEFVSEVEATEVVAEVDNEEDMDTRPPVVTIMGHVDHGKTSLLDYMRNSNVAGGESGGITQHVAAYEVTGSNGRKITFLDTPGHEAFTAMRARGAQVTDIVILVVAADDSVMPQTIEAINHAKAAGVPIVVAINKIDKPEANPEKIKTQLSEAGVLVEEWGGENQCQEISAKKGTGIVELMEKVLTEAEVRELKGNYSKEVLASGVIVESELDKGKGVISTVLVQRGFLKVGDPFVAGNTMGKVRAIMDERGKRIQSAGPSRPVSVLGFEDLPQSGDVLTVMASDREARDLAQKRQVIRREHEFRRSTRVKLDSISRQIKEGLMKELSVIIKADTDGSIQALADGLMKIQNDEVKVQIIHQGVGQITETDVLLAAASDAIIIGFRVRPNVNAKRLAEKEDLDVRFYSVIYHVLEDVEKALEGMLSPELHEESLGSLEIRQVFKVPKVGNVGGCYVLDGKILRDAKVRLLRDGVQIYDGTLDTLRRFKDDVKEVDAGYECGVGLKNYDDIKVGDVVEAYRIVETKRKL.

Basic and acidic residues predominate over residues 80-95 (LEEQSRKTVEKEDQLR). Disordered regions lie at residues 80–106 (LEEQ…VPGR), 149–169 (AVEA…DSPV), and 221–268 (DEFD…VDEK). Residues 253–262 (GKKKGKKKKK) show a composition bias toward basic residues. Residues 397-567 (TRPPVVTIMG…LTEAEVRELK (171 aa)) enclose the tr-type G domain. The G1 stretch occupies residues 406–413 (GHVDHGKT). Position 406–413 (406–413 (GHVDHGKT)) interacts with GTP. Positions 431-435 (GITQH) are G2. Residues 453–456 (DTPG) form a G3 region. GTP contacts are provided by residues 453–457 (DTPGH) and 507–510 (NKID). Residues 507 to 510 (NKID) are G4. The interval 543 to 545 (SAK) is G5.

It belongs to the TRAFAC class translation factor GTPase superfamily. Classic translation factor GTPase family. IF-2 subfamily.

The protein localises to the cytoplasm. Functionally, one of the essential components for the initiation of protein synthesis. Protects formylmethionyl-tRNA from spontaneous hydrolysis and promotes its binding to the 30S ribosomal subunits. Also involved in the hydrolysis of GTP during the formation of the 70S ribosomal complex. The chain is Translation initiation factor IF-2 from Chlorobium phaeovibrioides (strain DSM 265 / 1930) (Prosthecochloris vibrioformis (strain DSM 265)).